We begin with the raw amino-acid sequence, 92 residues long: Acylphosphatase (92 aa).

The 86-residue stretch at 5 to 90 (TWRLVAHGRV…GEFAGFEFRP (86 aa)) folds into the Acylphosphatase-like domain. Residues Arg-20 and Asn-38 contribute to the active site.

It belongs to the acylphosphatase family.

The enzyme catalyses an acyl phosphate + H2O = a carboxylate + phosphate + H(+). The chain is Acylphosphatase (acyP) from Cupriavidus necator (strain ATCC 17699 / DSM 428 / KCTC 22496 / NCIMB 10442 / H16 / Stanier 337) (Ralstonia eutropha).